The chain runs to 422 residues: UPF0597 protein Kole_0595 (422 aa).

It belongs to the UPF0597 family.

In Kosmotoga olearia (strain ATCC BAA-1733 / DSM 21960 / TBF 19.5.1), this protein is UPF0597 protein Kole_0595.